The sequence spans 263 residues: Ribonuclease HII (263 aa).

An RNase H type-2 domain is found at 71 to 262; the sequence is QAIAGIDEVG…VKSMCCDSTN (192 aa). Residues Asp-77, Glu-78, and Asp-172 each contribute to the a divalent metal cation site.

This sequence belongs to the RNase HII family. The cofactor is Mn(2+). Mg(2+) serves as cofactor.

The protein resides in the cytoplasm. The enzyme catalyses Endonucleolytic cleavage to 5'-phosphomonoester.. Its function is as follows. Endonuclease that specifically degrades the RNA of RNA-DNA hybrids. This Streptococcus pyogenes serotype M12 (strain MGAS2096) protein is Ribonuclease HII.